The sequence spans 88 residues: Small ribosomal subunit protein uS15c (88 aa).

It belongs to the universal ribosomal protein uS15 family. As to quaternary structure, part of the 30S ribosomal subunit.

It localises to the plastid. Its subcellular location is the chloroplast. This is Small ribosomal subunit protein uS15c (rps15) from Angiopteris evecta (Mule's foot fern).